The sequence spans 65 residues: Large ribosomal subunit protein bL35 (65 aa).

The interval 1–26 (MPKIKTVRGAAKRFKKTASGGFKRKQ) is disordered. The span at 10 to 26 (AAKRFKKTASGGFKRKQ) shows a compositional bias: basic residues.

The protein belongs to the bacterial ribosomal protein bL35 family.

The sequence is that of Large ribosomal subunit protein bL35 from Actinobacillus succinogenes (strain ATCC 55618 / DSM 22257 / CCUG 43843 / 130Z).